The following is a 305-amino-acid chain: Translation initiation factor eIF2B subunit alpha (305 aa).

K35 is subject to N6-acetyllysine.

The protein belongs to the eIF-2B alpha/beta/delta subunits family. As to quaternary structure, component of the translation initiation factor 2B (eIF2B) complex which is a heterodecamer of two sets of five different subunits: alpha, beta, gamma, delta and epsilon. Subunits alpha, beta and delta comprise a regulatory subcomplex and subunits epsilon and gamma comprise a catalytic subcomplex. Within the complex, the hexameric regulatory complex resides at the center, with the two heterodimeric catalytic subcomplexes bound on opposite sides.

Its subcellular location is the cytoplasm. It is found in the cytosol. Its activity is regulated as follows. Activated by the chemical integrated stress response (ISR) inhibitor ISRIB which stimulates guanine nucleotide exchange factor activity for both phosphorylated and unphosphorylated eIF2. In terms of biological role, acts as a component of the translation initiation factor 2B (eIF2B) complex, which catalyzes the exchange of GDP for GTP on eukaryotic initiation factor 2 (eIF2) gamma subunit. Its guanine nucleotide exchange factor activity is repressed when bound to eIF2 complex phosphorylated on the alpha subunit, thereby limiting the amount of methionyl-initiator methionine tRNA available to the ribosome and consequently global translation is repressed. This is Translation initiation factor eIF2B subunit alpha (Eif2b1) from Rattus norvegicus (Rat).